Consider the following 301-residue polypeptide: MGSRYERLQKIGEGSYGVVFRARDVTTGTIVAVKRIRLEKEEEGVPCTAIREISILKELRHENIVRLLDVCHSEKRLTLVFECMEMDLKKYMDHVGGDLDAGTIQEFMRSLLSGVRFCHERNVLHRDLKPPNLLISREKELKLADFGLGRAFGIPVKKFTQEVVTLWYRSPDVLLGSTQYGTPVDIWSVGCIFAEMAIGAPLFTGKNDADQLLRIFQFLGTPNRQVWPSMDTYPNSSNMLSRPEFQQTLAATCEEQFQTNPAYAKLGPQGIDLLRWLLRYEPSERLTAAQALEHPYFSVEF.

The region spanning 5–297 (YERLQKIGEG…AAQALEHPYF (293 aa)) is the Protein kinase domain. Residues 11-19 (IGEGSYGVV) and K34 contribute to the ATP site. S15 is subject to Phosphoserine. Y16 is modified (phosphotyrosine). The active-site Proton acceptor is the D127. T160 carries the phosphothreonine; by CAK modification.

This sequence belongs to the protein kinase superfamily. CMGC Ser/Thr protein kinase family. CDC2/CDKX subfamily. Forms a stable but non-covalent complex with a regulatory subunit and with a cyclin.

It carries out the reaction L-seryl-[protein] + ATP = O-phospho-L-seryl-[protein] + ADP + H(+). It catalyses the reaction L-threonyl-[protein] + ATP = O-phospho-L-threonyl-[protein] + ADP + H(+). With respect to regulation, phosphorylation at Ser-15 or Tyr-16 inactivates the enzyme, while phosphorylation at Thr-160 activates it. Probably involved in the control of the cell cycle. This Trypanosoma brucei brucei protein is Cell division control protein 2 homolog 1 (CRK1).